We begin with the raw amino-acid sequence, 406 residues long: Leu/Ile/Val-binding protein homolog 5 (406 aa).

Positions 1–29 (MIGTRLPAWTRVLACGVAGLSLMTISAKA) are cleaved as a signal peptide.

This sequence belongs to the leucine-binding protein family.

Its function is as follows. Component of an amino-acid transport system. In Brucella abortus (strain 2308), this protein is Leu/Ile/Val-binding protein homolog 5.